A 173-amino-acid chain; its full sequence is Large ribosomal subunit protein uL5 (173 aa).

The protein belongs to the universal ribosomal protein uL5 family. In terms of assembly, part of the 50S ribosomal subunit; contacts the 5S rRNA and probably tRNA. Forms a bridge to the 30S subunit in the 70S ribosome.

Its function is as follows. This is one of the proteins that bind and probably mediate the attachment of the 5S RNA into the large ribosomal subunit, where it forms part of the central protuberance. In the 70S ribosome it contacts protein S13 of the 30S subunit (bridge B1b), connecting the 2 subunits; this bridge is implicated in subunit movement. May contact the P site tRNA; the 5S rRNA and some of its associated proteins might help stabilize positioning of ribosome-bound tRNAs. The polypeptide is Large ribosomal subunit protein uL5 (Nitrosopumilus maritimus (strain SCM1)).